The following is a 174-amino-acid chain: Phytochrome-interacting ankyrin-repeat protein 2 (174 aa).

Positions Met1–Arg13 are enriched in low complexity. The segment at Met1–Gly29 is disordered. The residue at position 15 (Ser15) is a Phosphoserine. ANK repeat units follow at residues Arg28–Ala57, Lys65–Ala94, and Cys100–Asp129.

As to quaternary structure, interacts with phytochrome A (PHYA), both in Pr and Pfr forms. Binds to PIF3, a repressor of photomorphogenesis in response to phytochrome-mediated light signaling; this interaction may trigger the repression of PHYA-mediated PIF3 phosphorylation. Interacts with SIGE/SIG5 in mitochondrion. Interacts with RPS9M (via C terminus). Post-translationally, phosphorylated by PHYA. As to expression, mostly expressed in flowers, cotyledons, leaves and siliques, and, to a lower extent, in roots and stems. Also detected at low levels in seedlings grown in continuous dark or light conditions. Expressed in male and female gametophytes.

It localises to the cytoplasm. The protein localises to the nucleus. It is found in the mitochondrion. Its function is as follows. Promotes anthocyanin accumulation through interaction with PHYA, especially in response to far-red light, high light and sucrose treatment, probably by triggering A3G2XYLT/UF3GT expression. Required for gametophytes development as well as male-female gamete recognition during fertilization, possibly by regulating mitochondrial gene expression. Represses PHYA-mediated PIF3 phosphorylation. The polypeptide is Phytochrome-interacting ankyrin-repeat protein 2 (Arabidopsis thaliana (Mouse-ear cress)).